Consider the following 145-residue polypeptide: Probable inactive ribonuclease-like protein 12 (145 aa).

The N-terminal stretch at 1–19 is a signal peptide; that stretch reads MVLMVVVFLLLLFWENELT.

It belongs to the pancreatic ribonuclease family.

The protein localises to the secreted. Its function is as follows. Does not exhibit any ribonuclease activity. The chain is Probable inactive ribonuclease-like protein 12 (Rnase12) from Mus musculus (Mouse).